The following is a 164-amino-acid chain: Arginine repressor (164 aa).

Belongs to the ArgR family.

Its subcellular location is the cytoplasm. Its pathway is amino-acid biosynthesis; L-arginine biosynthesis [regulation]. Its function is as follows. Regulates arginine biosynthesis genes. This Mycolicibacterium paratuberculosis (strain ATCC BAA-968 / K-10) (Mycobacterium paratuberculosis) protein is Arginine repressor.